The following is a 303-amino-acid chain: Kanosamine kinase (303 aa).

Belongs to the ROK (NagC/XylR) family.

The catalysed reaction is kanosamine + ATP = D-kanosamine 6-phosphate + ADP + H(+). The protein operates within antibiotic biosynthesis; rifamycin B biosynthesis. With respect to regulation, inhibited by Zn(2+), Cu(2+), and Fe(2+). Its function is as follows. Involved in the biosynthesis of 3-amino-5-hydroxybenzoate (AHBA), a compound that then serves as the starter unit for the assembly of a polyketide during the biosynthesis of rifamycin B and other ansamycin antibiotics. Catalyzes only the phosphorylation of kanosamine to yield kanosamine 6-phosphate. In Amycolatopsis mediterranei (strain S699) (Nocardia mediterranei), this protein is Kanosamine kinase (rifN).